The following is a 128-amino-acid chain: Global transcriptional regulator Spx 1 (128 aa).

Cysteines 10 and 13 form a disulfide.

It belongs to the ArsC family. Spx subfamily. As to quaternary structure, interacts with the C-terminal domain of the alpha subunit of the RNAP.

Its subcellular location is the cytoplasm. Global transcriptional regulator that plays a key role in stress response and exerts either positive or negative regulation of genes. Acts by interacting with the C-terminal domain of the alpha subunit of the RNA polymerase (RNAP). This interaction can enhance binding of RNAP to the promoter region of target genes and stimulate their transcription, or block interaction of RNAP with activator. This Lactococcus lactis subsp. lactis (strain IL1403) (Streptococcus lactis) protein is Global transcriptional regulator Spx 1.